A 59-amino-acid chain; its full sequence is Large ribosomal subunit protein uL30 (59 aa).

It belongs to the universal ribosomal protein uL30 family. As to quaternary structure, part of the 50S ribosomal subunit.

The polypeptide is Large ribosomal subunit protein uL30 (Clostridium kluyveri (strain ATCC 8527 / DSM 555 / NBRC 12016 / NCIMB 10680 / K1)).